The primary structure comprises 44 residues: uncharacterized protein (44 aa).

The helical transmembrane segment at 4 to 24 (ISSILIRGGGVLIVVILLLWI) threads the bilayer.

It localises to the membrane. This is an uncharacterized protein from Ornithodoros (relapsing fever ticks).